A 108-amino-acid chain; its full sequence is Protein SMALL AUXIN UP-REGULATED RNA 51 (108 aa).

This sequence belongs to the ARG7 family. As to expression, expressed in organ primordia. Hardly observed in leaves.

Its subcellular location is the cell membrane. Its function is as follows. Provide a mechanistic link between auxin and plasma membrane H(+)-ATPases (PM H(+)-ATPases, e.g. AHA1 and AHA2), and triggers PM H(+)-ATPases activity by promoting phosphorylation of their C-terminal autoinhibitory domain as a result of PP2C-D subfamily of type 2C phosphatases inhibition, thus leading to the acidification of the apoplast and the facilitation of solutes and water uptake to drive cell expansion. Triggers plant growth probably by promoting cell elongation. Regulates branch angles and bending. This is Protein SMALL AUXIN UP-REGULATED RNA 51 from Arabidopsis thaliana (Mouse-ear cress).